A 274-amino-acid polypeptide reads, in one-letter code: DNA repair protein Rad1 (274 aa).

It belongs to the rad1 family. In terms of assembly, component of the 9-1-1 checkpoint clamp complex consisting of Rad9 isoform A, Rad1 and Hus1-like; the interaction with Hus1-like is direct. Does not interact directly with Rad9; this interaction is probably mediated by Hus1-like. This complex probably also forms with Rad9 isoform B, however 9-1-1 complex containing Rad9 isoform A localizes to the nuclear periphery. Expressed in ovary.

It is found in the cytoplasm. The protein resides in the nucleus. The protein localises to the nucleus envelope. This chain is DNA repair protein Rad1, found in Drosophila melanogaster (Fruit fly).